A 329-amino-acid chain; its full sequence is Sulfate/thiosulfate import ATP-binding protein CysA (329 aa).

The ABC transporter domain occupies 3-237; the sequence is IEVRNVSKRF…PANDFVYHFL (235 aa). 35 to 42 contributes to the ATP binding site; sequence GPSGCGKT.

This sequence belongs to the ABC transporter superfamily. Sulfate/tungstate importer (TC 3.A.1.6) family. The complex is composed of two ATP-binding proteins (CysA), two transmembrane proteins (CysT and CysW) and a solute-binding protein (CysP).

The protein localises to the cell inner membrane. It catalyses the reaction sulfate(out) + ATP + H2O = sulfate(in) + ADP + phosphate + H(+). The enzyme catalyses thiosulfate(out) + ATP + H2O = thiosulfate(in) + ADP + phosphate + H(+). Functionally, part of the ABC transporter complex CysAWTP involved in sulfate/thiosulfate import. Responsible for energy coupling to the transport system. In Pseudomonas putida (strain ATCC 47054 / DSM 6125 / CFBP 8728 / NCIMB 11950 / KT2440), this protein is Sulfate/thiosulfate import ATP-binding protein CysA.